A 388-amino-acid chain; its full sequence is Norsolorinic acid reductase (388 aa).

Residue Y74 is the Proton donor of the active site. Residue 233–243 (GVLGRGQFRSA) participates in NADP(+) binding.

It belongs to the aldo/keto reductase family. Aldo/keto reductase 2 subfamily.

Its pathway is mycotoxin biosynthesis; aflatoxin biosynthesis. In Aspergillus flavus (strain ATCC 200026 / FGSC A1120 / IAM 13836 / NRRL 3357 / JCM 12722 / SRRC 167), this protein is Norsolorinic acid reductase (norA).